The following is a 330-amino-acid chain: Polygalacturonase inhibitor (330 aa).

An N-terminal signal peptide occupies residues 1-24; that stretch reads MELKFSTFLSLTLLFSSVLNPALS. Intrachain disulfides connect Cys-27–Cys-57 and Cys-58–Cys-65. 7 LRR repeats span residues 69–92, 93–118, 119–141, 142–166, 167–192, 194–215, and 217–237; these read TNRI…LVGD, LPYL…IAKL, KGLK…FLSQ, LKNL…LSEL, PNLG…QFIG, VPDL…FAQM, and FTSI…IFGL. Asn-106, Asn-130, Asn-144, and Asn-154 each carry an N-linked (GlcNAc...) asparagine glycan. Asn-238 and Asn-254 each carry an N-linked (GlcNAc...) asparagine glycan. 3 LRR repeats span residues 239–261, 262–285, and 287–309; these read KTTQ…VEFP, TSLT…FTQL, and FQFL…KLQS. Residue Asn-291 is glycosylated (N-linked (GlcNAc...) asparagine). Intrachain disulfides connect Cys-298–Cys-320 and Cys-322–Cys-329.

This sequence belongs to the polygalacturonase-inhibiting protein family. In terms of assembly, homodimer. Post-translationally, N-linked glycosylated. In terms of tissue distribution, mostly expressed in fruits, and, to a lower extent, in flowers and leaves.

The protein resides in the secreted. It localises to the extracellular space. Its subcellular location is the apoplast. It is found in the cell wall. Inhibitor of fungal polygalacturonase. It is an important factor for plant resistance to phytopathogenic fungi. This is Polygalacturonase inhibitor (PGIP) from Pyrus communis (Pear).